We begin with the raw amino-acid sequence, 311 residues long: D-allose-binding periplasmic protein (311 aa).

Residues 1 to 23 (MNKYLKYFSGTLVGLMLSTSAFA) form the signal peptide.

Belongs to the bacterial solute-binding protein 2 family.

It localises to the periplasm. Its function is as follows. Part of the binding-protein-dependent transport system AlsBAC for D-allose. In Escherichia coli (strain K12), this protein is D-allose-binding periplasmic protein (alsB).